A 357-amino-acid polypeptide reads, in one-letter code: tRNA-specific 2-thiouridylase MnmA (357 aa).

Residues 8 to 15 (GISGGVDS) and isoleucine 34 contribute to the ATP site. Catalysis depends on cysteine 96, which acts as the Nucleophile. The cysteines at positions 96 and 192 are disulfide-linked. Glycine 120 contacts ATP. The tract at residues 142–144 (KDQ) is interaction with tRNA. The Cysteine persulfide intermediate role is filled by cysteine 192. The tract at residues 301-302 (RY) is interaction with tRNA.

It belongs to the MnmA/TRMU family.

The protein resides in the cytoplasm. The catalysed reaction is S-sulfanyl-L-cysteinyl-[protein] + uridine(34) in tRNA + AH2 + ATP = 2-thiouridine(34) in tRNA + L-cysteinyl-[protein] + A + AMP + diphosphate + H(+). Functionally, catalyzes the 2-thiolation of uridine at the wobble position (U34) of tRNA, leading to the formation of s(2)U34. This chain is tRNA-specific 2-thiouridylase MnmA, found in Chlorobium phaeobacteroides (strain DSM 266 / SMG 266 / 2430).